A 132-amino-acid polypeptide reads, in one-letter code: DNA-directed RNA polymerase subunit omega (132 aa).

The protein belongs to the RNA polymerase subunit omega family. In terms of assembly, the RNAP catalytic core consists of 2 alpha, 1 beta, 1 beta' and 1 omega subunit. When a sigma factor is associated with the core the holoenzyme is formed, which can initiate transcription.

The enzyme catalyses RNA(n) + a ribonucleoside 5'-triphosphate = RNA(n+1) + diphosphate. In terms of biological role, promotes RNA polymerase assembly. Latches the N- and C-terminal regions of the beta' subunit thereby facilitating its interaction with the beta and alpha subunits. This Bartonella bacilliformis (strain ATCC 35685 / KC583 / Herrer 020/F12,63) protein is DNA-directed RNA polymerase subunit omega.